The sequence spans 209 residues: Adenylate kinase (209 aa).

ATP is bound at residue Gly10–Thr15. The interval Ser30–Val59 is NMP. Residues Thr31, Arg36, Ala57–Val59, Gly85–Arg88, and Gln92 contribute to the AMP site. The tract at residues Gly121–Asp158 is LID. ATP is bound at residue Arg122. The Zn(2+) site is built by Cys125 and Cys128. Residue Ser131 to Phe132 coordinates ATP. 2 residues coordinate Zn(2+): Cys145 and Cys148. AMP-binding residues include Arg155 and Arg166. Pro194 provides a ligand contact to ATP.

This sequence belongs to the adenylate kinase family. As to quaternary structure, monomer.

The protein resides in the cytoplasm. The catalysed reaction is AMP + ATP = 2 ADP. Its pathway is purine metabolism; AMP biosynthesis via salvage pathway; AMP from ADP: step 1/1. Functionally, catalyzes the reversible transfer of the terminal phosphate group between ATP and AMP. Plays an important role in cellular energy homeostasis and in adenine nucleotide metabolism. This Treponema denticola (strain ATCC 35405 / DSM 14222 / CIP 103919 / JCM 8153 / KCTC 15104) protein is Adenylate kinase.